Consider the following 378-residue polypeptide: Apoptosis-inducing factor 1 (378 aa).

Residues 7–25 (NIVVVGAGVFGVSVANHLY) traverse the membrane as a helical segment. FAD contacts are provided by residues 12-16 (GAGVF), R51, K56, and D283.

Belongs to the FAD-dependent oxidoreductase family. It depends on FAD as a cofactor.

The protein localises to the mitochondrion outer membrane. The protein resides in the nucleus. Its function is as follows. Putative FAD-dependent oxidoreductase involved in the resistance to cercosporin and other singlet oxygen-generating photosensitizers. Translocates from mitochondria to the nucleus under apoptotic conditions, where it degrades DNA and induces apoptosis. The sequence is that of Apoptosis-inducing factor 1 (AIF1) from Saccharomyces cerevisiae (strain ATCC 204508 / S288c) (Baker's yeast).